The following is a 268-amino-acid chain: Octanoyltransferase (268 aa).

Residues 49–237 (GTQGDVILVV…ALLKALSGEL (189 aa)) form the BPL/LPL catalytic domain. Substrate is bound by residues 87-94 (RGGRITWH), 167-169 (ALG), and 180-182 (GLA). Cys198 acts as the Acyl-thioester intermediate in catalysis.

It belongs to the LipB family.

The protein resides in the cytoplasm. It catalyses the reaction octanoyl-[ACP] + L-lysyl-[protein] = N(6)-octanoyl-L-lysyl-[protein] + holo-[ACP] + H(+). It participates in protein modification; protein lipoylation via endogenous pathway; protein N(6)-(lipoyl)lysine from octanoyl-[acyl-carrier-protein]: step 1/2. Its function is as follows. Catalyzes the transfer of endogenously produced octanoic acid from octanoyl-acyl-carrier-protein onto the lipoyl domains of lipoate-dependent enzymes. Lipoyl-ACP can also act as a substrate although octanoyl-ACP is likely to be the physiological substrate. The sequence is that of Octanoyltransferase from Corynebacterium aurimucosum (strain ATCC 700975 / DSM 44827 / CIP 107346 / CN-1) (Corynebacterium nigricans).